A 121-amino-acid chain; its full sequence is Large ribosomal subunit protein bL20 (121 aa).

This sequence belongs to the bacterial ribosomal protein bL20 family.

Its function is as follows. Binds directly to 23S ribosomal RNA and is necessary for the in vitro assembly process of the 50S ribosomal subunit. It is not involved in the protein synthesizing functions of that subunit. This chain is Large ribosomal subunit protein bL20, found in Methylorubrum populi (strain ATCC BAA-705 / NCIMB 13946 / BJ001) (Methylobacterium populi).